Consider the following 431-residue polypeptide: Serine--tRNA ligase (431 aa).

238–240 (TAE) is an L-serine binding site. 269 to 271 (RSE) is an ATP binding site. E292 contacts L-serine. ATP is bound at residue 356 to 359 (EISS). S392 serves as a coordination point for L-serine.

It belongs to the class-II aminoacyl-tRNA synthetase family. Type-1 seryl-tRNA synthetase subfamily. In terms of assembly, homodimer. The tRNA molecule binds across the dimer.

The protein resides in the cytoplasm. The enzyme catalyses tRNA(Ser) + L-serine + ATP = L-seryl-tRNA(Ser) + AMP + diphosphate + H(+). The catalysed reaction is tRNA(Sec) + L-serine + ATP = L-seryl-tRNA(Sec) + AMP + diphosphate + H(+). The protein operates within aminoacyl-tRNA biosynthesis; selenocysteinyl-tRNA(Sec) biosynthesis; L-seryl-tRNA(Sec) from L-serine and tRNA(Sec): step 1/1. Functionally, catalyzes the attachment of serine to tRNA(Ser). Is also able to aminoacylate tRNA(Sec) with serine, to form the misacylated tRNA L-seryl-tRNA(Sec), which will be further converted into selenocysteinyl-tRNA(Sec). The sequence is that of Serine--tRNA ligase from Pectobacterium carotovorum subsp. carotovorum (strain PC1).